A 541-amino-acid chain; its full sequence is Phosphoenolpyruvate carboxykinase (ATP) (541 aa).

243 to 250 lines the ATP pocket; it reads GLSGTGKT.

The protein belongs to the phosphoenolpyruvate carboxykinase (ATP) family.

The catalysed reaction is oxaloacetate + ATP = phosphoenolpyruvate + ADP + CO2. It functions in the pathway carbohydrate biosynthesis; gluconeogenesis. This chain is Phosphoenolpyruvate carboxykinase (ATP) (PCK1), found in Eremothecium gossypii (strain ATCC 10895 / CBS 109.51 / FGSC 9923 / NRRL Y-1056) (Yeast).